Reading from the N-terminus, the 149-residue chain is Cytochrome c-type biogenesis protein CcmE (149 aa).

The Cytoplasmic segment spans residues 1-7 (MKARHKR). The helical; Signal-anchor for type II membrane protein transmembrane segment at 8–28 (LGLIVAGLAALGLGAALVLSA) threads the bilayer. Topologically, residues 29–149 (FQKNLVFFFT…GAPALAGALK (121 aa)) are periplasmic. Residues His-123 and Tyr-127 each contribute to the heme site.

Belongs to the CcmE/CycJ family.

Its subcellular location is the cell inner membrane. Its function is as follows. Heme chaperone required for the biogenesis of c-type cytochromes. Transiently binds heme delivered by CcmC and transfers the heme to apo-cytochromes in a process facilitated by CcmF and CcmH. In Polaromonas naphthalenivorans (strain CJ2), this protein is Cytochrome c-type biogenesis protein CcmE.